Consider the following 171-residue polypeptide: Ribosome maturation factor RimM (171 aa).

The region spanning 96–170 (AEGEYYYHEI…LVTIHVTEGL (75 aa)) is the PRC barrel domain.

The protein belongs to the RimM family. Binds ribosomal protein uS19.

It localises to the cytoplasm. Its function is as follows. An accessory protein needed during the final step in the assembly of 30S ribosomal subunit, possibly for assembly of the head region. Essential for efficient processing of 16S rRNA. May be needed both before and after RbfA during the maturation of 16S rRNA. It has affinity for free ribosomal 30S subunits but not for 70S ribosomes. The protein is Ribosome maturation factor RimM of Bacillus anthracis (strain A0248).